The chain runs to 1331 residues: MLAAPRAGCGAALLLWIVSSCLCRAWTAPSTSQKCDEPLVSGLPHGAFSSSSSISGSYSPGYAKINKRGGAGGWSPSDSDHYQWLQVDFGNRKQISAIATQGRYSSSDWVTQYRMLYSDTGRNWKPYHQDGNIWAFPGNINSDGVVRHELQHPVIARYVRVVPLDWNGEGRIGLRIEVYGCSYWADVINFDGHVVLPYRFRNKKMKTLKDVIALKFKTSESEGVILHGEGQQGDYITLELKKAKLVLSLNLGSNQLGPIYGHTSVMTGSLLDDHHWHSVIIERQGRSINLTLDRSMQHFRTNGEFDYLDLDYEITFGGIPFSGKPSSSSRKNFKGCMESINYNGINITVLARRKKLEPSNVGNLSFSCVEPYTVPVFFNATSYLEVPGRLNQDLFSVSFQFRTWNPNGLLVFSHFADNLGNVEIDLTESKVGVHINITQTKMSQIDISSGSGLNDGQWHEVRFLAKENFAILTIDGDEASAVRTNSPLQVKTGEKYFFGGFLNQMNNSSHSVLQPSFQGCMQLIQVDDQLVNLYEVAQRKPGSFANVSIDMCAIIDRCVPNHCERGGKCSQTWDSFKCTCDETGYTGATCHNSIYEPSCEAYKHLGQTSNYYWIDPDGSGPLGPLKVYCNMTEDKVWTIVSHDLQMQTTVVSYNPEKHSVIQLVYSASMDQISAITDSAEYCEQYISYFCKMSRLLNTPDGSPYTWWVGKANEKHYYWGGSGPGIQKCACGIERNCTDPKYYCNCDADYKQWRKDAGFLSYKDHLPVSQVVVGDTDRQGSEAKLSVGPLRCQGDRNYWNAASFPNPSSYLHFSTFQGETSADISFYFKTLTPWGVFLENMGKEDFIKLELKSATEVSFSFDVGNGPVEIVVRSPTPLNDDQWHRITAERNVKQASLQVDRLPQQIRKAPTEGHTRLELYSQLFVGGAGGQQGFLGCIRSLRMNGVTLDLEERAKVTSGFISGCSGHCTSYGTNCENGGKCLERYHGYSCDCSNTAYDGTFCNKDVGAFFEEGMWLRYNFQAPATNARDSSSRVENAPDQQNSHPDLAQEEIRFSFSTTKAPCILLYISSFTTDFLAVLVKPTGSLQIRYNLGGTREPYNIDTDHRNMANGQPHSVNNTRHEKTIILKLDHYPSVSYHLPSSSDTLFNSPKSLFLGKVIETGKIDQEIHKYNTPGFTGCLSRVQFNQIAPLKAALRQTNASAHVHIQGELVESNCGASPLTLSPMSSATDPWHLDHLDSASADFPYNPGQGQAIRNGVNRNSAIIGGVIAVVIFTILCTLVFLIRYMFRHKGTYHTNEAKGAESAESADAAIMNNDPNFTETIDESKKEWLI.

The signal sequence occupies residues 1 to 27; the sequence is MLAAPRAGCGAALLLWIVSSCLCRAWT. The Extracellular segment spans residues 28 to 1262; the sequence is APSTSQKCDE…IRNGVNRNSA (1235 aa). Positions 35 to 181 constitute an F5/8 type C domain; it reads CDEPLVSGLP…IGLRIEVYGC (147 aa). A disulfide bond links C35 and C181. Laminin G-like domains follow at residues 187-368 and 373-552; these read VINF…SFSC and TVPV…IDMC. N289, N346, N363, N379, N436, N506, N507, and N546 each carry an N-linked (GlcNAc...) asparagine glycan. C336 and C368 are disulfide-bonded. 4 disulfides stabilise this stretch: C520/C552, C558/C569, C563/C578, and C580/C590. The region spanning 554–591 is the EGF-like 1 domain; that stretch reads IIDRCVPNHCERGGKCSQTWDSFKCTCDETGYTGATCH. The region spanning 592 to 798 is the Fibrinogen C-terminal domain; sequence NSIYEPSCEA…LRCQGDRNYW (207 aa). N-linked (GlcNAc...) asparagine glycosylation is found at N630 and N735. A Laminin G-like 3 domain is found at 799–963; it reads NAASFPNPSS…KVTSGFISGC (165 aa). Disulfide bonds link C936-C963, C967-C980, C974-C989, and C991-C1001. Residues 964 to 1002 form the EGF-like 2 domain; the sequence is SGHCTSYGTNCENGGKCLERYHGYSCDCSNTAYDGTFCN. The region spanning 1023 to 1214 is the Laminin G-like 4 domain; that stretch reads ATNARDSSSR…IQGELVESNC (192 aa). N-linked (GlcNAc...) asparagine glycans are attached at residues N1116 and N1198. A disulfide bond links C1178 and C1214. The chain crosses the membrane as a helical span at residues 1263–1283; that stretch reads IIGGVIAVVIFTILCTLVFLI. Residues 1284-1331 are Cytoplasmic-facing; sequence RYMFRHKGTYHTNEAKGAESAESADAAIMNNDPNFTETIDESKKEWLI. A phosphoserine mark is found at S1303 and S1306.

The protein belongs to the neurexin family. In terms of assembly, interacts (via C-terminus) with KCNA2.

The protein localises to the membrane. The protein resides in the cell projection. It is found in the axon. It localises to the cell junction. Its subcellular location is the paranodal septate junction. Required for gap junction formation. Required, with CNTNAP1, for radial and longitudinal organization of myelinated axons. Plays a role in the formation of functional distinct domains critical for saltatory conduction of nerve impulses in myelinated nerve fibers. Demarcates the juxtaparanodal region of the axo-glial junction. This Pongo abelii (Sumatran orangutan) protein is Contactin-associated protein-like 2 (CNTNAP2).